A 128-amino-acid chain; its full sequence is CD59 glycoprotein (128 aa).

The first 25 residues, 1–25, serve as a signal peptide directing secretion; that stretch reads MGIQGGSVLFGLLLVLAVFCHSGHS. One can recognise a UPAR/Ly6 domain in the interval 26-108; that stretch reads LQCYNCPNPT…QLENGGTSLS (83 aa). Disulfide bonds link cysteine 28/cysteine 51, cysteine 31/cysteine 38, and cysteine 44/cysteine 64. Asparagine 43 is a glycosylation site (N-linked (GlcNAc...) asparagine). Lysine 66 carries N-linked (Glc) (glycation) lysine glycosylation. 2 disulfide bridges follow: cysteine 70–cysteine 88 and cysteine 89–cysteine 94. 2 O-linked (GalNAc...) threonine glycosylation sites follow: threonine 76 and threonine 77. Residue asparagine 102 is the site of GPI-anchor amidated asparagine attachment. A propeptide spans 103–128 (removed in mature form); sequence GGTSLSEKTVLLLVTPFLAAAWSLHP.

Interacts with T-cell surface antigen CD2. N- and O-glycosylated. The N-glycosylation mainly consists of a family of biantennary complex-type structures with and without lactosamine extensions and outer arm fucose residues. Also significant amounts of triantennary complexes (22%). Variable sialylation also present in the Asn-43 oligosaccharide. The predominant O-glycans are mono-sialylated forms of the disaccharide, Gal-beta-1,3GalNAc, and their sites of attachment are probably on Thr-76 and Thr-77. The GPI-anchor of soluble urinary CD59 has no inositol-associated phospholipid, but is composed of seven different GPI-anchor variants of one or more monosaccharide units. Major variants contain sialic acid, mannose and glucosamine. Sialic acid linked to an N-acetylhexosamine-galactose arm is present in two variants. Post-translationally, glycated. Glycation is found in diabetic subjects, but only at minimal levels in nondiabetic subjects. Glycated CD59 lacks MAC-inhibitory function and confers to vascular complications of diabetes.

It is found in the cell membrane. Its subcellular location is the secreted. Functionally, potent inhibitor of the complement membrane attack complex (MAC) action, which protects human cells from damage during complement activation. Acts by binding to the beta-haipins of C8 (C8A and C8B) components of the assembling MAC, forming an intermolecular beta-sheet that prevents incorporation of the multiple copies of C9 required for complete formation of the osmolytic pore. In terms of biological role, the soluble form from urine retains its specific complement binding activity, but exhibits greatly reduced ability to inhibit complement membrane attack complex (MAC) assembly on cell membranes. This is CD59 glycoprotein from Homo sapiens (Human).